A 358-amino-acid chain; its full sequence is Methylthioribose-1-phosphate isomerase (358 aa).

Substrate is bound by residues 54–56 (RGA), R96, and Q205. D246 (proton donor) is an active-site residue. Residue 256 to 257 (GK) coordinates substrate.

The protein belongs to the eIF-2B alpha/beta/delta subunits family. MtnA subfamily.

The enzyme catalyses 5-(methylsulfanyl)-alpha-D-ribose 1-phosphate = 5-(methylsulfanyl)-D-ribulose 1-phosphate. It functions in the pathway amino-acid biosynthesis; L-methionine biosynthesis via salvage pathway; L-methionine from S-methyl-5-thio-alpha-D-ribose 1-phosphate: step 1/6. Functionally, catalyzes the interconversion of methylthioribose-1-phosphate (MTR-1-P) into methylthioribulose-1-phosphate (MTRu-1-P). The protein is Methylthioribose-1-phosphate isomerase of Pseudomonas putida (strain ATCC 47054 / DSM 6125 / CFBP 8728 / NCIMB 11950 / KT2440).